The primary structure comprises 443 residues: tRNA modification GTPase MnmE (443 aa).

(6S)-5-formyl-5,6,7,8-tetrahydrofolate-binding residues include Arg23, Glu82, and Lys121. The region spanning 215–364 (GTSIVLAGHP…LKQFIQKWMQ (150 aa)) is the TrmE-type G domain. Asn225 contributes to the K(+) binding site. Residues 225 to 230 (NVGKSS), 244 to 250 (TDIPGTT), and 269 to 272 (DSAG) each bind GTP. Mg(2+) is bound at residue Ser229. Thr244, Ile246, and Thr249 together coordinate K(+). Thr250 contributes to the Mg(2+) binding site. Lys443 lines the (6S)-5-formyl-5,6,7,8-tetrahydrofolate pocket.

It belongs to the TRAFAC class TrmE-Era-EngA-EngB-Septin-like GTPase superfamily. TrmE GTPase family. Homodimer. Heterotetramer of two MnmE and two MnmG subunits. Requires K(+) as cofactor.

Its subcellular location is the cytoplasm. In terms of biological role, exhibits a very high intrinsic GTPase hydrolysis rate. Involved in the addition of a carboxymethylaminomethyl (cmnm) group at the wobble position (U34) of certain tRNAs, forming tRNA-cmnm(5)s(2)U34. The sequence is that of tRNA modification GTPase MnmE from Chlamydia caviae (strain ATCC VR-813 / DSM 19441 / 03DC25 / GPIC) (Chlamydophila caviae).